The chain runs to 302 residues: Sulfate adenylyltransferase subunit 2 (302 aa).

The protein belongs to the PAPS reductase family. CysD subfamily. Heterodimer composed of CysD, the smaller subunit, and CysN.

It catalyses the reaction sulfate + ATP + H(+) = adenosine 5'-phosphosulfate + diphosphate. It functions in the pathway sulfur metabolism; hydrogen sulfide biosynthesis; sulfite from sulfate: step 1/3. In terms of biological role, with CysN forms the ATP sulfurylase (ATPS) that catalyzes the adenylation of sulfate producing adenosine 5'-phosphosulfate (APS) and diphosphate, the first enzymatic step in sulfur assimilation pathway. APS synthesis involves the formation of a high-energy phosphoric-sulfuric acid anhydride bond driven by GTP hydrolysis by CysN coupled to ATP hydrolysis by CysD. In Citrobacter koseri (strain ATCC BAA-895 / CDC 4225-83 / SGSC4696), this protein is Sulfate adenylyltransferase subunit 2.